The sequence spans 558 residues: MRSSLFKSGLEKAPHRSLLYALGLTKEEMRRPLIGVVNSANEVVPGHIHLNTIAEAVKAGIRLAGGTPMTFPVIGVCDGLAMNHAGMHFSLVSREIIADSIEIMASAHPFDALVCIPNCDKVVPGMLMAMLRLNIPAVIVSGGPMLAGTTSEGSFDLIDVFEAVGKFKRGAINEDQLEELEENACPGCGSCSGMFTANSMNCLSESVGLGLPGNGTIPAVSAKRVRLAKTAGMRVMDLLEKNIRPRDIVTAKSIENAVTMDMALGCSTNTVLHLPAVFAEAGLPLTLDIFDAVSRKTPNLCKLSPAGKHYLDDLERAGGIPAVMSELAKRGLLHLDVMTATGKTLGENLTDLKARVKNFDVIRAKEPYANEGGIAILRGSLAPDGAVVKQSAVAPAMMRHTGPARVFDSEEAANKAILGGEIKAGDVVVIRYEGPQGGPGMREMLSPTSNIMGMGLGETVALITDGRFSGGTRGAAIGHVSPEAAEGGPIALIRDGDRIEVDIPGRKLDVLVDAAELEARRASVVAPEKVIESPLLRRYASLVKSAAQGAVYKDPAAK.

D78 contacts Mg(2+). C119 contacts [2Fe-2S] cluster. D120 and K121 together coordinate Mg(2+). K121 is subject to N6-carboxylysine. A [2Fe-2S] cluster-binding site is contributed by C191. A Mg(2+)-binding site is contributed by E443. S469 acts as the Proton acceptor in catalysis.

It belongs to the IlvD/Edd family. As to quaternary structure, homodimer. The cofactor is [2Fe-2S] cluster. Mg(2+) serves as cofactor.

It catalyses the reaction (2R)-2,3-dihydroxy-3-methylbutanoate = 3-methyl-2-oxobutanoate + H2O. It carries out the reaction (2R,3R)-2,3-dihydroxy-3-methylpentanoate = (S)-3-methyl-2-oxopentanoate + H2O. Its pathway is amino-acid biosynthesis; L-isoleucine biosynthesis; L-isoleucine from 2-oxobutanoate: step 3/4. It functions in the pathway amino-acid biosynthesis; L-valine biosynthesis; L-valine from pyruvate: step 3/4. Functions in the biosynthesis of branched-chain amino acids. Catalyzes the dehydration of (2R,3R)-2,3-dihydroxy-3-methylpentanoate (2,3-dihydroxy-3-methylvalerate) into 2-oxo-3-methylpentanoate (2-oxo-3-methylvalerate) and of (2R)-2,3-dihydroxy-3-methylbutanoate (2,3-dihydroxyisovalerate) into 2-oxo-3-methylbutanoate (2-oxoisovalerate), the penultimate precursor to L-isoleucine and L-valine, respectively. The polypeptide is Dihydroxy-acid dehydratase (Solidesulfovibrio magneticus (strain ATCC 700980 / DSM 13731 / RS-1) (Desulfovibrio magneticus)).